We begin with the raw amino-acid sequence, 93 residues long: UPF0147 protein PH1921.2 (93 aa).

It belongs to the UPF0147 family.

This chain is UPF0147 protein PH1921.2, found in Pyrococcus horikoshii (strain ATCC 700860 / DSM 12428 / JCM 9974 / NBRC 100139 / OT-3).